The sequence spans 66 residues: Large ribosomal subunit protein uL29 (66 aa).

The protein belongs to the universal ribosomal protein uL29 family.

This is Large ribosomal subunit protein uL29 from Ruegeria pomeroyi (strain ATCC 700808 / DSM 15171 / DSS-3) (Silicibacter pomeroyi).